The sequence spans 250 residues: MGQKVNPNGFRLGIIRDWTSRWYDDSPVIAEKIKQDHVIRNYVQARLKREKAGIARIVIERTTKHIKINIYAARPGAVVGRKGEEINNLSQELSRITGKEVKIDVVEVIKPETEAQLIGENIAYQLENRVSFRRAMKQAIQQAMRAGAEGIRIRCAGRLGGAEIARAEQYKEGKIPLHTIRANVDYASVTAHTIAGTIGIKVWVYKGEVLVQRIDAIEEDELKRINERRGDSKSRPRDPRNKRRRRTKRS.

A KH type-2 domain is found at 39–109; that stretch reads IRNYVQARLK…EVKIDVVEVI (71 aa). Residues 225–239 show a composition bias toward basic and acidic residues; that stretch reads INERRGDSKSRPRDP. The interval 225-250 is disordered; it reads INERRGDSKSRPRDPRNKRRRRTKRS. A compositionally biased stretch (basic residues) spans 240–250; that stretch reads RNKRRRRTKRS.

Belongs to the universal ribosomal protein uS3 family. In terms of assembly, part of the 30S ribosomal subunit. Forms a tight complex with proteins S10 and S14.

Its function is as follows. Binds the lower part of the 30S subunit head. Binds mRNA in the 70S ribosome, positioning it for translation. The polypeptide is Small ribosomal subunit protein uS3 (Chlorobium phaeobacteroides (strain DSM 266 / SMG 266 / 2430)).